Reading from the N-terminus, the 314-residue chain is 4-hydroxy-3-methylbut-2-enyl diphosphate reductase (314 aa).

[4Fe-4S] cluster is bound at residue Cys12. Residues His41 and His74 each contribute to the (2E)-4-hydroxy-3-methylbut-2-enyl diphosphate site. 2 residues coordinate dimethylallyl diphosphate: His41 and His74. Isopentenyl diphosphate is bound by residues His41 and His74. Cys96 is a [4Fe-4S] cluster binding site. His124 is a (2E)-4-hydroxy-3-methylbut-2-enyl diphosphate binding site. His124 contributes to the dimethylallyl diphosphate binding site. His124 is a binding site for isopentenyl diphosphate. Catalysis depends on Glu126, which acts as the Proton donor. Thr167 is a binding site for (2E)-4-hydroxy-3-methylbut-2-enyl diphosphate. Cys197 lines the [4Fe-4S] cluster pocket. 4 residues coordinate (2E)-4-hydroxy-3-methylbut-2-enyl diphosphate: Ser225, Ser226, Asn227, and Ser269. 4 residues coordinate dimethylallyl diphosphate: Ser225, Ser226, Asn227, and Ser269. Residues Ser225, Ser226, Asn227, and Ser269 each coordinate isopentenyl diphosphate.

The protein belongs to the IspH family. Requires [4Fe-4S] cluster as cofactor.

The enzyme catalyses isopentenyl diphosphate + 2 oxidized [2Fe-2S]-[ferredoxin] + H2O = (2E)-4-hydroxy-3-methylbut-2-enyl diphosphate + 2 reduced [2Fe-2S]-[ferredoxin] + 2 H(+). The catalysed reaction is dimethylallyl diphosphate + 2 oxidized [2Fe-2S]-[ferredoxin] + H2O = (2E)-4-hydroxy-3-methylbut-2-enyl diphosphate + 2 reduced [2Fe-2S]-[ferredoxin] + 2 H(+). The protein operates within isoprenoid biosynthesis; dimethylallyl diphosphate biosynthesis; dimethylallyl diphosphate from (2E)-4-hydroxy-3-methylbutenyl diphosphate: step 1/1. Its pathway is isoprenoid biosynthesis; isopentenyl diphosphate biosynthesis via DXP pathway; isopentenyl diphosphate from 1-deoxy-D-xylulose 5-phosphate: step 6/6. Functionally, catalyzes the conversion of 1-hydroxy-2-methyl-2-(E)-butenyl 4-diphosphate (HMBPP) into a mixture of isopentenyl diphosphate (IPP) and dimethylallyl diphosphate (DMAPP). Acts in the terminal step of the DOXP/MEP pathway for isoprenoid precursor biosynthesis. This Histophilus somni (strain 2336) (Haemophilus somnus) protein is 4-hydroxy-3-methylbut-2-enyl diphosphate reductase.